The chain runs to 248 residues: Triosephosphate isomerase (248 aa).

9 to 11 (NWK) is a binding site for substrate. Histidine 94 acts as the Electrophile in catalysis. Glutamate 166 (proton acceptor) is an active-site residue. Residues glycine 172, serine 212, and 233–234 (GG) each bind substrate.

It belongs to the triosephosphate isomerase family. Homodimer.

It localises to the cytoplasm. It carries out the reaction D-glyceraldehyde 3-phosphate = dihydroxyacetone phosphate. The protein operates within carbohydrate biosynthesis; gluconeogenesis. Its pathway is carbohydrate degradation; glycolysis; D-glyceraldehyde 3-phosphate from glycerone phosphate: step 1/1. In terms of biological role, involved in the gluconeogenesis. Catalyzes stereospecifically the conversion of dihydroxyacetone phosphate (DHAP) to D-glyceraldehyde-3-phosphate (G3P). The sequence is that of Triosephosphate isomerase from Clostridium botulinum (strain ATCC 19397 / Type A).